A 92-amino-acid chain; its full sequence is Putative septation protein SpoVG (92 aa).

The protein belongs to the SpoVG family.

Functionally, could be involved in septation. This is Putative septation protein SpoVG from Clostridioides difficile (strain 630) (Peptoclostridium difficile).